The chain runs to 537 residues: Membrane protein insertase YidC (537 aa).

Helical transmembrane passes span 6-26 (SLLA…WEID), 341-363 (LVSN…LYPL), 411-431 (LGGC…YWTF), 449-469 (LSAQ…MFLL), and 490-510 (PVIF…YWLV).

Belongs to the OXA1/ALB3/YidC family. Type 1 subfamily. In terms of assembly, interacts with the Sec translocase complex via SecD. Specifically interacts with transmembrane segments of nascent integral membrane proteins during membrane integration.

The protein resides in the cell inner membrane. Required for the insertion and/or proper folding and/or complex formation of integral membrane proteins into the membrane. Involved in integration of membrane proteins that insert both dependently and independently of the Sec translocase complex, as well as at least some lipoproteins. Aids folding of multispanning membrane proteins. The sequence is that of Membrane protein insertase YidC from Actinobacillus succinogenes (strain ATCC 55618 / DSM 22257 / CCUG 43843 / 130Z).